The chain runs to 367 residues: Alanine racemase (367 aa).

The active-site Proton acceptor; specific for D-alanine is the K40. K40 carries the post-translational modification N6-(pyridoxal phosphate)lysine. R136 contributes to the substrate binding site. The active-site Proton acceptor; specific for L-alanine is Y263. A substrate-binding site is contributed by M310.

The protein belongs to the alanine racemase family. Pyridoxal 5'-phosphate is required as a cofactor.

The enzyme catalyses L-alanine = D-alanine. The protein operates within amino-acid biosynthesis; D-alanine biosynthesis; D-alanine from L-alanine: step 1/1. In terms of biological role, catalyzes the interconversion of L-alanine and D-alanine. May also act on other amino acids. The sequence is that of Alanine racemase (alr) from Streptococcus pneumoniae (strain ATCC 700669 / Spain 23F-1).